A 74-amino-acid polypeptide reads, in one-letter code: ATP synthase subunit 9, mitochondrial (74 aa).

The next 2 helical transmembrane spans lie at 8 to 28 (IGAG…GNVF) and 50 to 70 (ILGF…AFLI).

This sequence belongs to the ATPase C chain family. In terms of assembly, F-type ATPases have 2 components, CF(1) - the catalytic core - and CF(0) - the membrane proton channel. CF(1) has five subunits: alpha(3), beta(3), gamma(1), delta(1), epsilon(1). CF(0) has three main subunits: a, b and c.

The protein resides in the mitochondrion membrane. This protein is one of the chains of the nonenzymatic membrane component (F0) of mitochondrial ATPase. This is ATP synthase subunit 9, mitochondrial (ATP9) from Triticum aestivum (Wheat).